The following is a 464-amino-acid chain: Fumarate hydratase class II (464 aa).

Substrate-binding positions include 98–100 (SGT), 129–132 (HPND), 139–141 (SSN), and Thr-187. Residue His-188 is the Proton donor/acceptor of the active site. Ser-318 is a catalytic residue. Substrate-binding positions include Ser-319 and 324–326 (KVN).

It belongs to the class-II fumarase/aspartase family. Fumarase subfamily. As to quaternary structure, homotetramer.

It is found in the cytoplasm. It catalyses the reaction (S)-malate = fumarate + H2O. It participates in carbohydrate metabolism; tricarboxylic acid cycle; (S)-malate from fumarate: step 1/1. In terms of biological role, involved in the TCA cycle. Catalyzes the stereospecific interconversion of fumarate to L-malate. This Wigglesworthia glossinidia brevipalpis protein is Fumarate hydratase class II.